We begin with the raw amino-acid sequence, 173 residues long: MPRSQKNDNFIDKTFSIIADLIVKILPTNKESKEAFYYYKDGMAAQSEGEYAEALACYYQALKIEKDPMDKSFILYNIGLIQASNGQHARALEYYHESLKFNPNLVQALNNIAVIYHYYGNKLFEQSKLQEAKLMFDKASNYWRKAIKLAPYNYIEAQNWLKITGRITEDIML.

TPR repeat units follow at residues 35 to 68 (AFYY…EKDP), 72 to 105 (SFIL…NPNL), and 120 to 153 (GNKL…APYN).

Belongs to the Ycf3 family.

It is found in the plastid. The protein resides in the chloroplast thylakoid membrane. Functionally, essential for the assembly of the photosystem I (PSI) complex. May act as a chaperone-like factor to guide the assembly of the PSI subunits. This Cyanidium caldarium (Red alga) protein is Photosystem I assembly protein Ycf3.